We begin with the raw amino-acid sequence, 174 residues long: uncharacterized protein (174 aa).

Residues 153–174 (RSGNHSAGNVHPASPMIKVQGG) form a disordered region.

This is an uncharacterized protein from Sinorhizobium fredii (strain NBRC 101917 / NGR234).